A 303-amino-acid chain; its full sequence is MYYGFDVGGTKIEFGAFNEKLERVATERVATPRDDYDKLVDTIVGIIQKADNDLGCEGLVGIGLPGMEDARDGSVLTSNIPAAKGRFLRKDLEAKLGRTVTIDNDANCFALSEAWDESLQGEKSVLGLILGTGFGGGLVFDGHVFSGMNHVAGELGHTRMPIDAWFSLGEKAPLFTCGCDNKGCIDNYLSGRGFEQLYAHYYGENLKAIEIIKLHATGEAKAVEHVDRFMEMLAICLANIFTGLDPHVVVLGGGLSNFELLYQELPKRIAKHLLSVAQVPKIVKAKHGDAGGVRGAAFLNIKK.

ATP contacts are provided by residues 4–11 (GFDVGGTK) and 133–140 (GFGGGLVF). Zn(2+)-binding residues include His-157, Cys-177, Cys-179, and Cys-184.

It belongs to the ROK (NagC/XylR) family. NagK subfamily.

The catalysed reaction is N-acetyl-D-glucosamine + ATP = N-acetyl-D-glucosamine 6-phosphate + ADP + H(+). The protein operates within cell wall biogenesis; peptidoglycan recycling. Functionally, catalyzes the phosphorylation of N-acetyl-D-glucosamine (GlcNAc) derived from cell-wall degradation, yielding GlcNAc-6-P. The chain is N-acetyl-D-glucosamine kinase from Photobacterium profundum (strain SS9).